A 164-amino-acid chain; its full sequence is Thiol peroxidase (164 aa).

Residues valine 18–asparagine 163 form the Thioredoxin domain. The active-site Cysteine sulfenic acid (-SOH) intermediate is cysteine 60. The cysteines at positions 60 and 93 are disulfide-linked.

This sequence belongs to the peroxiredoxin family. Tpx subfamily. As to quaternary structure, homodimer.

It catalyses the reaction a hydroperoxide + [thioredoxin]-dithiol = an alcohol + [thioredoxin]-disulfide + H2O. Its function is as follows. Thiol-specific peroxidase that catalyzes the reduction of hydrogen peroxide and organic hydroperoxides to water and alcohols, respectively. Plays a role in cell protection against oxidative stress by detoxifying peroxides. The sequence is that of Thiol peroxidase from Staphylococcus haemolyticus (strain JCSC1435).